We begin with the raw amino-acid sequence, 522 residues long: Cell polarity protein mod5 (522 aa).

5 disordered regions span residues 1 to 83, 119 to 158, 170 to 192, 251 to 285, and 300 to 516; these read MSAL…PDGD, KRSA…FNSN, RRIL…TKSA, PLQP…SPVP, and YSPS…KLEK. Polar residues-rich tracts occupy residues 27–46, 66–76, and 131–146; these read PNTT…SAPS, LPSSKQDTGSS, and NGST…SPSE. S43 bears the Phosphoserine mark. The segment covering 258-285 has biased composition (low complexity); that stretch reads PANETPASSSSSAKARPVSVPDMSSPVP. S303 carries the post-translational modification Phosphoserine. Over residues 308 to 318 the composition is skewed to basic and acidic residues; that stretch reads KVAETDSESRK. Positions 335–349 are enriched in polar residues; it reads GAQTQSTPNRISRSD. S350 carries the post-translational modification Phosphoserine. 2 stretches are compositionally biased toward polar residues: residues 363 to 396 and 404 to 431; these read NAST…TSTN and DIPQ…TPQV. A compositionally biased stretch (low complexity) spans 439-452; that stretch reads SRSSPLPSASVPAL. Basic and acidic residues-rich tracts occupy residues 472-482 and 495-516; these read HESEMPPHVTR and PKEK…KLEK.

In terms of assembly, interacts with tea1 and tea3.

It is found in the cell membrane. With tea1, acts in a positive-feedback loop in the microtubule-mediated regulation of cell polarity. Involved in the anchoring of tea1 at the cortex as well as the correct localization of tea3. The chain is Cell polarity protein mod5 (mod5) from Schizosaccharomyces pombe (strain 972 / ATCC 24843) (Fission yeast).